Consider the following 178-residue polypeptide: uncharacterized protein (178 aa).

Its function is as follows. This protein is non-essential for virus function. This is an uncharacterized protein from Sulfolobus spindle-shape virus 1 (SSV1).